Reading from the N-terminus, the 115-residue chain is Toxin CSTX-9 (115 aa).

The N-terminal stretch at 1–20 (MKVLVICAVLFLAIFSNSSA) is a signal peptide. The propeptide occupies 21 to 47 (ETEDDFLEDESFEADDVIPFLAREQVR). 4 cysteine pairs are disulfide-bonded: C53/C68, C60/C77, C67/C95, and C79/C93.

The protein belongs to the neurotoxin 19 (CSTX) family. In terms of assembly, monomer. Interacts with CSTX-13 (AC P83919) (Kd=370 nM), but does not interact with CSTX-1 (AC P81694). Expressed by the venom gland.

The protein localises to the secreted. The protein resides in the target cell membrane. Synergistic toxin that induces or increases a cytolytic effect when combined with CSTX-1 (AC P81694) or CSTX-13 (AC P83919). Potassium ions and M-ctenitoxin-Cs1a (AC P83619) have also an effect on its activity. When alone, has no insecticidal activity. The chain is Toxin CSTX-9 from Cupiennius salei (American wandering spider).